The primary structure comprises 335 residues: Glycerol-3-phosphate dehydrogenase [NAD(P)+] (335 aa).

Ser-12, Trp-13, and Lys-107 together coordinate NADPH. Residues Lys-107, Gly-138, and Ser-140 each coordinate sn-glycerol 3-phosphate. Ala-142 contributes to the NADPH binding site. Lys-193, Asp-246, Ser-256, Arg-257, and Asn-258 together coordinate sn-glycerol 3-phosphate. The active-site Proton acceptor is Lys-193. NADPH is bound at residue Arg-257. NADPH-binding residues include Val-281 and Glu-283.

It belongs to the NAD-dependent glycerol-3-phosphate dehydrogenase family.

It is found in the cytoplasm. It catalyses the reaction sn-glycerol 3-phosphate + NAD(+) = dihydroxyacetone phosphate + NADH + H(+). It carries out the reaction sn-glycerol 3-phosphate + NADP(+) = dihydroxyacetone phosphate + NADPH + H(+). The protein operates within membrane lipid metabolism; glycerophospholipid metabolism. Its function is as follows. Catalyzes the reduction of the glycolytic intermediate dihydroxyacetone phosphate (DHAP) to sn-glycerol 3-phosphate (G3P), the key precursor for phospholipid synthesis. This Citrifermentans bemidjiense (strain ATCC BAA-1014 / DSM 16622 / JCM 12645 / Bem) (Geobacter bemidjiensis) protein is Glycerol-3-phosphate dehydrogenase [NAD(P)+].